Here is a 786-residue protein sequence, read N- to C-terminus: Ribosome biogenesis protein BOP1 homolog (786 aa).

The segment covering 1 to 11 has biased composition (basic residues); the sequence is MTKKLTIKRKV. The tract at residues 1–161 is disordered; the sequence is MTKKLTIKRK…DSDTSDEEDI (161 aa). Acidic residues-rich tracts occupy residues 28-37, 46-55, 62-74, and 86-103; these read DNEEEEEEDL, EDSTDDEGID, SSED…DEEG, and SGDD…EDDA. The span at 104–113 shows a compositional bias: basic and acidic residues; it reads DAKKSSKNND. Residues 151-160 show a composition bias toward acidic residues; that stretch reads ADSDTSDEED. WD repeat units follow at residues 447 to 488, 490 to 528, 572 to 614, 617 to 655, 658 to 697, 701 to 740, and 756 to 786; these read GHTD…RTIE, EDVV…KLLV, THFK…SQIP, KSKG…LIKK, TNSK…KPYQ, LHRN…DLLQ, and REEF…RLFT.

It belongs to the WD repeat BOP1/ERB1 family.

The protein localises to the nucleus. Its subcellular location is the nucleolus. It localises to the nucleoplasm. Required for maturation of ribosomal RNAs and formation of the large ribosomal subunit. In Drosophila pseudoobscura pseudoobscura (Fruit fly), this protein is Ribosome biogenesis protein BOP1 homolog.